Here is a 448-residue protein sequence, read N- to C-terminus: Asparagine--tRNA ligase (448 aa).

The protein belongs to the class-II aminoacyl-tRNA synthetase family. Homodimer.

It localises to the cytoplasm. It carries out the reaction tRNA(Asn) + L-asparagine + ATP = L-asparaginyl-tRNA(Asn) + AMP + diphosphate + H(+). This is Asparagine--tRNA ligase from Streptococcus suis (strain 98HAH33).